The chain runs to 162 residues: Non-specific lipid transfer protein GPI-anchored 27 (162 aa).

An N-terminal signal peptide occupies residues 1-29 (MAYTNKVAVAVGAAVVFLAVVMNPRWTEA). Intrachain disulfides connect Cys-39–Cys-78, Cys-50–Cys-62, Cys-63–Cys-102, and Cys-76–Cys-110. Asn-68 is a glycosylation site (N-linked (GlcNAc...) asparagine). Asn-124 and Asn-135 each carry an N-linked (GlcNAc...) asparagine glycan. Ser-137 carries GPI-anchor amidated serine lipidation. The propeptide at 138-162 (VGGKNKVATSMSAFGLVAILLFVMF) is removed in mature form.

It belongs to the plant LTP family.

The protein resides in the cell membrane. Probable lipid transfer protein. The polypeptide is Non-specific lipid transfer protein GPI-anchored 27 (Arabidopsis thaliana (Mouse-ear cress)).